Reading from the N-terminus, the 255-residue chain is Electron transfer flavoprotein subunit beta (255 aa).

The residue at position 2 (A2) is an N-acetylalanine. AMP-binding positions include A9, 39–42 (NPFC), C66, and 123–134 (GKQAIDDDCNQT). Residues 183 to 205 (ADLRLNEPRYATLPNIMKAKKKK) form a recognition loop region. K200 bears the N6,N6,N6-trimethyllysine; by ETFBKMT; alternate mark. At K200 the chain carries N6-acetyllysine; alternate. At K200 the chain carries N6-methyllysine; alternate. Residue K203 is modified to N6,N6,N6-trimethyllysine; by ETFBKMT. K210 bears the N6-acetyllysine; alternate mark. K210 is modified (N6-succinyllysine; alternate). S223 and S226 each carry phosphoserine. K238 carries the N6-acetyllysine modification. Position 248 is an N6-acetyllysine; alternate (K248). An N6-succinyllysine; alternate modification is found at K248.

It belongs to the ETF beta-subunit/FixA family. As to quaternary structure, heterodimer composed of ETFA and ETFB. Identified in a complex that contains ETFA, ETFB and ETFRF1. Interacts with ACADM. Methylated. Trimethylation at Lys-200 and Lys-203 may negatively regulate the activity in electron transfer from acyl-CoA dehydrogenases.

It localises to the mitochondrion matrix. Functionally, heterodimeric electron transfer flavoprotein that accepts electrons from several mitochondrial dehydrogenases, including acyl-CoA dehydrogenases, glutaryl-CoA and sarcosine dehydrogenase. It transfers the electrons to the main mitochondrial respiratory chain via ETF-ubiquinone oxidoreductase. Required for normal mitochondrial fatty acid oxidation and normal amino acid metabolism. ETFB binds an AMP molecule that probably has a purely structural role. The protein is Electron transfer flavoprotein subunit beta of Bos taurus (Bovine).